The sequence spans 492 residues: MANYFNTLSLREKLDQLGVCEFMDRSEFSDGVAALKGKKIVIVGCGAQGLNQGLNLRDSGLDVSYTLRKEAIDSKRQSFLNASENGFKVGTYEELIPTADLVINLTPDKQHTAVVSAVMPLMKKGSTLSYSHGFNIVEEGMQIRKDITVIMVAPKSPGSEVREEYKRGFGVPTLIAVHPENDPEGKGWDYAKAYCVGTGGDRAGVLKSSFVAEVKSDLMGEQTILCGLLQTGSILCFDKMVEKGIDKGYASKLIQYGWEVITESLKHGGISGMMDRLSNPAKIKAFQVSEELKDIMRPLFRKHQDDIISGEFSRIMMEDWANGDKNLLTWRAATGETAFEKTPAGDVKIAEQEYYDNGLLMVAMVRAGVELAFETMTESGIIDESAYYESLHETPLIANTIARKKLFEMNRVISDTAEYGCYLFDHACKPLLANFMKTVDTDIIGKNFNAGKDNGVDNQMLIAVNEVLRSHPIEIVGAELREAMTEMKAIVS.

In terms of domain architecture, KARI N-terminal Rossmann spans 17 to 208 (LGVCEFMDRS…GGDRAGVLKS (192 aa)). NADP(+) is bound by residues 45 to 48 (CGAQ), Arg-68, Arg-76, Ser-78, and 108 to 110 (DKQ). The active site involves His-132. Gly-158 provides a ligand contact to NADP(+). KARI C-terminal knotted domains are found at residues 209–353 (SFVA…AEQE) and 354–487 (YYDN…MTEM). Asp-217, Glu-221, Glu-389, and Glu-393 together coordinate Mg(2+). Ser-414 lines the substrate pocket.

It belongs to the ketol-acid reductoisomerase family. Mg(2+) serves as cofactor.

The catalysed reaction is (2R)-2,3-dihydroxy-3-methylbutanoate + NADP(+) = (2S)-2-acetolactate + NADPH + H(+). The enzyme catalyses (2R,3R)-2,3-dihydroxy-3-methylpentanoate + NADP(+) = (S)-2-ethyl-2-hydroxy-3-oxobutanoate + NADPH + H(+). Its pathway is amino-acid biosynthesis; L-isoleucine biosynthesis; L-isoleucine from 2-oxobutanoate: step 2/4. It functions in the pathway amino-acid biosynthesis; L-valine biosynthesis; L-valine from pyruvate: step 2/4. In terms of biological role, involved in the biosynthesis of branched-chain amino acids (BCAA). Catalyzes an alkyl-migration followed by a ketol-acid reduction of (S)-2-acetolactate (S2AL) to yield (R)-2,3-dihydroxy-isovalerate. In the isomerase reaction, S2AL is rearranged via a Mg-dependent methyl migration to produce 3-hydroxy-3-methyl-2-ketobutyrate (HMKB). In the reductase reaction, this 2-ketoacid undergoes a metal-dependent reduction by NADPH to yield (R)-2,3-dihydroxy-isovalerate. The sequence is that of Ketol-acid reductoisomerase (NADP(+)) from Cytophaga hutchinsonii (strain ATCC 33406 / DSM 1761 / CIP 103989 / NBRC 15051 / NCIMB 9469 / D465).